The following is a 187-amino-acid chain: Adenine phosphoribosyltransferase (187 aa).

Belongs to the purine/pyrimidine phosphoribosyltransferase family. In terms of assembly, homodimer.

The protein localises to the cytoplasm. The enzyme catalyses AMP + diphosphate = 5-phospho-alpha-D-ribose 1-diphosphate + adenine. Its pathway is purine metabolism; AMP biosynthesis via salvage pathway; AMP from adenine: step 1/1. In terms of biological role, catalyzes a salvage reaction resulting in the formation of AMP, that is energically less costly than de novo synthesis. This chain is Adenine phosphoribosyltransferase, found in Yersinia pestis (strain Pestoides F).